The sequence spans 240 residues: ATP-dependent dethiobiotin synthetase BioD (240 aa).

15–20 (EIGKTF) is a binding site for ATP. A Mg(2+)-binding site is contributed by Thr-19. Lys-40 is a catalytic residue. ATP is bound by residues Asp-57, 118-121 (EGVG), and 178-179 (NR). The Mg(2+) site is built by Asp-57 and Glu-118.

It belongs to the dethiobiotin synthetase family. Homodimer. It depends on Mg(2+) as a cofactor.

It localises to the cytoplasm. It carries out the reaction (7R,8S)-7,8-diammoniononanoate + CO2 + ATP = (4R,5S)-dethiobiotin + ADP + phosphate + 3 H(+). It functions in the pathway cofactor biosynthesis; biotin biosynthesis; biotin from 7,8-diaminononanoate: step 1/2. Functionally, catalyzes a mechanistically unusual reaction, the ATP-dependent insertion of CO2 between the N7 and N8 nitrogen atoms of 7,8-diaminopelargonic acid (DAPA, also called 7,8-diammoniononanoate) to form a ureido ring. The polypeptide is ATP-dependent dethiobiotin synthetase BioD (Burkholderia pseudomallei (strain K96243)).